The primary structure comprises 175 residues: Movement protein (175 aa).

The tract at residues 30 to 47 (ADLDDDEEVTTGQEELFL) is homodimerization. Residues 50 to 156 (EQVRARHLFS…QRLTSTERNG (107 aa)) are RNA-binding. Phosphoserine is present on residues S64 and S133. Composition is skewed to polar residues over residues 116–141 (SLTSWTHTVNSTPFPQLSTSSGSQSP) and 148–169 (RLTSTERNGTTLPRTNSGSSTK). Residues 116–175 (SLTSWTHTVNSTPFPQLSTSSGSQSPGKGRLQRLTSTERNGTTLPRTNSGSSTKAMVLHR) are disordered.

It belongs to the polerovirus movement protein family. Homodimer. Post-translationally, phosphorylated.

It localises to the host cell junction. The protein resides in the host plasmodesma. Its subcellular location is the host Golgi apparatus. In terms of biological role, together with movement protein P3a, facilitates long-distance movement of virions in host. Transports viral genome to neighboring plant cells directly through plasmosdesmata, without any budding. The movement protein allows efficient cell to cell propagation, by bypassing the host cell wall barrier. Binds ssRNA. The sequence is that of Movement protein from Turnip yellows virus (isolate FL-1) (TuYV).